The following is a 254-amino-acid chain: Galactitol 2-dehydrogenase (L-tagatose-forming) (254 aa).

NAD(+) is bound by residues 21 to 23 (SGI), Asp-42, 66 to 67 (DV), Tyr-159, Lys-163, and 192 to 194 (VAT). The active-site Proton acceptor is the Tyr-159. Mg(2+) is bound at residue Trp-254.

Belongs to the short-chain dehydrogenases/reductases (SDR) family. Homotetramer. A divalent metal cation is required as a cofactor.

It carries out the reaction galactitol + NAD(+) = keto-L-tagatose + NADH + H(+). Its activity is regulated as follows. Inhibited by the chelating agents EDTA and alpha,alpha'-dipyridyl. Inhibited by Zn(2+) and Fe(2+). In terms of biological role, catalyzes the interconversion of galactitol to the rare sugar L-tagatose. Shows activity with a wide range of substrates, and catalyzes the oxidation of a variety of polyvalent aliphatic alcohols and polyols to the corresponding ketones and ketoses, respectively, and in the reverse reaction, it reduces ketones with high stereoselectivity yielding the corresponding S-configurated alcohols. Shows high activity with D-threitol, xylitol, 1,2-hexanediol, 1,2-pentanediol, 2-hexanol, L-erythrulose, D-ribulose and acetoin. Specific for NAD(+). The sequence is that of Galactitol 2-dehydrogenase (L-tagatose-forming) from Cereibacter sphaeroides (Rhodobacter sphaeroides).